The chain runs to 286 residues: Putative sugar uptake protein lmo0176 (286 aa).

The next 8 helical transmembrane spans lie at 4 to 26 (MIAL…FGGS), 33 to 55 (GMTL…VYTL), 114 to 136 (LRII…TSYA), 149 to 167 (GLIT…VVLI), 177 to 194 (AILP…IMTH), 207 to 226 (LLLT…MVHA), 230 to 252 (VGVA…GGII), and 264 to 283 (LFVI…IGVA).

The protein belongs to the GRP transporter (TC 2.A.7.5) family.

It localises to the cell membrane. The protein is Putative sugar uptake protein lmo0176 of Listeria monocytogenes serovar 1/2a (strain ATCC BAA-679 / EGD-e).